We begin with the raw amino-acid sequence, 461 residues long: TWiK family of potassium channels protein 18 (461 aa).

Residues 1-21 (MAIVAQGVSTILTTFQKTFKG) are Cytoplasmic-facing. A helical transmembrane segment spans residues 22-42 (LLPLIILVAYTLLGAWIFWMI). Asn88 carries N-linked (GlcNAc...) asparagine glycosylation. An intramembrane region (pore-forming) is located at residues 116–136 (FLGSIFYCMTVYTTIGYGNIV). Residues 144–164 (FATILYAFIGIPLTVLSLYCL) traverse the membrane as a helical segment. The Cytoplasmic portion of the chain corresponds to 165 to 224 (GSLFAKGCKMLWRFFLKSTRVVSKDLSNKISEAADNIEEGTTAITPSAEKTENNDDDLLS). Residues 225–245 (FPISGLLLITVIWVIFCAVLF) traverse the membrane as a helical segment. An intramembrane region (pore-forming) is located at residues 253–273 (FGTSLYFTLISFTTIGFGDIL). The helical transmembrane segment at 281-301 (PIVGVLLLIGLSLVSTVMTLI) threads the bilayer. Residues 302–461 (QQQIEALASG…GNEDYLEHDI (160 aa)) are Cytoplasmic-facing. The tract at residues 328 to 347 (REDGEVDEHVDPEEDPENNK) is disordered.

It belongs to the two pore domain potassium channel (TC 1.A.1.8) family. As to expression, expressed in body wall muscle.

The protein localises to the membrane. In terms of biological role, outwardly rectifying potassium channel protein; activity is sharply augmented by increase in temperature. The polypeptide is TWiK family of potassium channels protein 18 (twk-18) (Caenorhabditis elegans).